Consider the following 1081-residue polypeptide: Teashirt homolog 3 (1081 aa).

Disordered regions lie at residues 141–161 (PSSE…SSCG) and 238–257 (HYRD…WSKP). Residues 148–161 (GSSSSSSSSSSSCG) are compositionally biased toward low complexity. C2H2-type zinc fingers lie at residues 214-238 (FRCK…ETGH) and 275-299 (LKCM…KTKH). Basic and acidic residues predominate over residues 238–247 (HYRDDNHETD). The segment at 325–364 (SLELELPSSPDSTGGTPKATISDTNDALQKNSNPYITPNN) is disordered. Residues 335-364 (DSTGGTPKATISDTNDALQKNSNPYITPNN) show a composition bias toward polar residues. Residues 386–404 (LKCMECGSSHDTLQELTAH) form a C2H2-type 3; atypical zinc finger. The segment covering 473–491 (EVDKEKAVTDEKPKQKDKP) has biased composition (basic and acidic residues). 4 disordered regions span residues 473–502 (EVDK…DISS), 579–604 (NSEI…PMPK), 626–687 (EKMK…LAEP), and 855–897 (TESH…RQSN). Polar residues predominate over residues 581–603 (EIVSPTKNQTLVSPPSSQTSPMP). The stretch at 606–630 (NFHAMEELVKKVTEKVAKVEEKMKE) forms a coiled coil. S682 is modified (phosphoserine). Over residues 856-869 (ESHTSKSSTPSSIS) the composition is skewed to low complexity. Residues 891-961 (RKGRQSNWNP…NVKYQLRRTG (71 aa)) constitute a DNA-binding region (homeobox; atypical). 2 C2H2-type zinc fingers span residues 976 to 998 (FFCN…LESH) and 1041 to 1064 (YQCK…SKTH).

Belongs to the teashirt C2H2-type zinc-finger protein family. As to quaternary structure, interacts (via homeobox domain) with APBB1 (via PID domain 1). Interacts (via N-terminus) with HDAC1 and HDAC2; the interaction is direct. Found in a trimeric complex with APBB1 and HDAC1; the interaction between HDAC1 and APBB1 is mediated by TSHZ3. Expressed in brain; strongly reduced in post-mortem elderly subjects with Alzheimer disease. Expressed in the fetal neocortex.

The protein localises to the nucleus. Its subcellular location is the cell projection. The protein resides in the growth cone. Transcriptional regulator involved in developmental processes. Functions in association with APBB1, SET and HDAC factors as a transcriptional repressor, that inhibits the expression of CASP4. TSHZ3-mediated transcription repression involves the recruitment of histone deacetylases HDAC1 and HDAC2. Associates with chromatin in a region surrounding the CASP4 transcriptional start site(s). Regulates the development of neurons involved in both respiratory rhythm and airflow control. Promotes maintenance of nucleus ambiguus (nA) motoneurons, which govern upper airway function, and establishes a respiratory rhythm generator (RRG) activity compatible with survival at birth. Involved in the differentiation of the proximal uretic smooth muscle cells during developmental processes. Involved in the up-regulation of myocardin, that directs the expression of smooth muscle cells in the proximal ureter. Involved in the modulation of glutamatergic synaptic transmission and long-term synaptic potentiation. In Homo sapiens (Human), this protein is Teashirt homolog 3 (TSHZ3).